The sequence spans 383 residues: Chorismate synthase (383 aa).

NADP(+) is bound at residue arginine 48. FMN is bound by residues 125-127, glycine 286, 301-305, and arginine 328; these read RSS and HAPTS. Residues 361 to 383 are disordered; it reads PDRLDDNPGQYETEYHPSSPQTN.

It belongs to the chorismate synthase family. The cofactor is FMNH2.

The catalysed reaction is 5-O-(1-carboxyvinyl)-3-phosphoshikimate = chorismate + phosphate. The protein operates within metabolic intermediate biosynthesis; chorismate biosynthesis; chorismate from D-erythrose 4-phosphate and phosphoenolpyruvate: step 7/7. Its function is as follows. Catalyzes the anti-1,4-elimination of the C-3 phosphate and the C-6 proR hydrogen from 5-enolpyruvylshikimate-3-phosphate (EPSP) to yield chorismate, which is the branch point compound that serves as the starting substrate for the three terminal pathways of aromatic amino acid biosynthesis. This reaction introduces a second double bond into the aromatic ring system. This is Chorismate synthase from Haloquadratum walsbyi (strain DSM 16790 / HBSQ001).